A 730-amino-acid polypeptide reads, in one-letter code: Polyribonucleotide nucleotidyltransferase (730 aa).

Residues D489 and D495 each coordinate Mg(2+). The region spanning 556-615 (PRIEVMKIAVDKIREVIGSGGKVIREIVEKTGAKINIEDDGTIKIASASGDAIKAAINWI) is the KH domain. The S1 motif domain occupies 625–693 (GQIYEGTVVK…ERGKTRLSMK (69 aa)). Residues 700–730 (GEDLEAKAKAERDAARAAAPAATGDEAGAAE) are disordered. The span at 703–714 (LEAKAKAERDAA) shows a compositional bias: basic and acidic residues. Positions 715–730 (RAAAPAATGDEAGAAE) are enriched in low complexity.

The protein belongs to the polyribonucleotide nucleotidyltransferase family. Mg(2+) serves as cofactor.

Its subcellular location is the cytoplasm. It catalyses the reaction RNA(n+1) + phosphate = RNA(n) + a ribonucleoside 5'-diphosphate. Its function is as follows. Involved in mRNA degradation. Catalyzes the phosphorolysis of single-stranded polyribonucleotides processively in the 3'- to 5'-direction. This Xanthobacter autotrophicus (strain ATCC BAA-1158 / Py2) protein is Polyribonucleotide nucleotidyltransferase.